The following is a 97-amino-acid chain: Integration host factor subunit alpha (97 aa).

The protein belongs to the bacterial histone-like protein family. As to quaternary structure, heterodimer of an alpha and a beta chain.

In terms of biological role, this protein is one of the two subunits of integration host factor, a specific DNA-binding protein that functions in genetic recombination as well as in transcriptional and translational control. The sequence is that of Integration host factor subunit alpha from Colwellia psychrerythraea (strain 34H / ATCC BAA-681) (Vibrio psychroerythus).